The primary structure comprises 50 residues: Sperm protamine P1 (50 aa).

It belongs to the protamine P1 family. Cross-linked by interchain disulfide bonds around the DNA-helix. As to expression, testis.

It localises to the nucleus. The protein resides in the chromosome. Functionally, protamines substitute for histones in the chromatin of sperm during the haploid phase of spermatogenesis. They compact sperm DNA into a highly condensed, stable and inactive complex. The protein is Sperm protamine P1 (PRM1) of Saguinus imperator (Emperor tamarin).